The chain runs to 150 residues: UPF0260 protein PP_4587 (150 aa).

The protein belongs to the UPF0260 family.

The sequence is that of UPF0260 protein PP_4587 from Pseudomonas putida (strain ATCC 47054 / DSM 6125 / CFBP 8728 / NCIMB 11950 / KT2440).